The sequence spans 501 residues: Probable leucine aminopeptidase 2 (501 aa).

The signal sequence occupies residues 1–18; sequence MVTMKLLYLTSFASLAVA. The PA domain occupies 119-216; it reads SPSVNATAPL…ADGQALIQMI (98 aa). N-linked (GlcNAc...) asparagine glycosylation is found at asparagine 123 and asparagine 233. Zn(2+) is bound by residues histidine 257 and aspartate 269. Glutamate 301 functions as the Proton acceptor in the catalytic mechanism. Zn(2+) is bound at residue glutamate 302. Asparagine 316 is a glycosylation site (N-linked (GlcNAc...) asparagine). Aspartate 330 is a Zn(2+) binding site. N-linked (GlcNAc...) asparagine glycosylation occurs at asparagine 350. Position 428 (histidine 428) interacts with Zn(2+). N-linked (GlcNAc...) asparagine glycans are attached at residues asparagine 433 and asparagine 467. Positions 480–501 are disordered; sequence AMKRTPHTHTGGTGCYKDRVEQ.

The protein belongs to the peptidase M28 family. M28A subfamily. In terms of assembly, monomer. Requires Zn(2+) as cofactor.

The protein resides in the secreted. In terms of biological role, extracellular aminopeptidase that releases a wide variety of amino acids from natural peptides and contributes to pathogenicity. In Aspergillus fumigatus (strain ATCC MYA-4609 / CBS 101355 / FGSC A1100 / Af293) (Neosartorya fumigata), this protein is Probable leucine aminopeptidase 2 (lap2).